The sequence spans 292 residues: Bifunctional protein FolD (292 aa).

Residues 166–168 (GRS), S191, and I232 contribute to the NADP(+) site.

This sequence belongs to the tetrahydrofolate dehydrogenase/cyclohydrolase family. In terms of assembly, homodimer.

The enzyme catalyses (6R)-5,10-methylene-5,6,7,8-tetrahydrofolate + NADP(+) = (6R)-5,10-methenyltetrahydrofolate + NADPH. The catalysed reaction is (6R)-5,10-methenyltetrahydrofolate + H2O = (6R)-10-formyltetrahydrofolate + H(+). It participates in one-carbon metabolism; tetrahydrofolate interconversion. Catalyzes the oxidation of 5,10-methylenetetrahydrofolate to 5,10-methenyltetrahydrofolate and then the hydrolysis of 5,10-methenyltetrahydrofolate to 10-formyltetrahydrofolate. In Wolbachia pipientis wMel, this protein is Bifunctional protein FolD.